The sequence spans 132 residues: NADPH-dependent 7-cyano-7-deazaguanine reductase (132 aa).

Residue Cys34 is the Thioimide intermediate of the active site. Asp41 functions as the Proton donor in the catalytic mechanism. Substrate contacts are provided by residues 56-58 (IEL) and 75-76 (HE).

Belongs to the GTP cyclohydrolase I family. QueF type 1 subfamily.

It localises to the cytoplasm. It carries out the reaction 7-aminomethyl-7-carbaguanine + 2 NADP(+) = 7-cyano-7-deazaguanine + 2 NADPH + 3 H(+). The protein operates within tRNA modification; tRNA-queuosine biosynthesis. In terms of biological role, catalyzes the NADPH-dependent reduction of 7-cyano-7-deazaguanine (preQ0) to 7-aminomethyl-7-deazaguanine (preQ1). This Vesicomyosocius okutanii subsp. Calyptogena okutanii (strain HA) protein is NADPH-dependent 7-cyano-7-deazaguanine reductase.